We begin with the raw amino-acid sequence, 1342 residues long: DNA-directed RNA polymerase subunit beta (1342 aa).

The protein belongs to the RNA polymerase beta chain family. In terms of assembly, the RNAP catalytic core consists of 2 alpha, 1 beta, 1 beta' and 1 omega subunit. When a sigma factor is associated with the core the holoenzyme is formed, which can initiate transcription.

The enzyme catalyses RNA(n) + a ribonucleoside 5'-triphosphate = RNA(n+1) + diphosphate. In terms of biological role, DNA-dependent RNA polymerase catalyzes the transcription of DNA into RNA using the four ribonucleoside triphosphates as substrates. This is DNA-directed RNA polymerase subunit beta from Buchnera aphidicola subsp. Schizaphis graminum (strain Sg).